The sequence spans 313 residues: Phosphate import ATP-binding protein PstB 2 (313 aa).

The span at 1–33 shows a compositional bias: polar residues; the sequence is MSDSINTEPSTDTQTNGERTVETTSPSAETTAG. A disordered region spans residues 1–40; it reads MSDSINTEPSTDTQTNGERTVETTSPSAETTAGESEEQVR. In terms of domain architecture, ABC transporter spans 54 to 308; the sequence is LSVENLDVWY…PESQRVEDYI (255 aa). Residue 86–93 participates in ATP binding; that stretch reads GPSGCGKS.

It belongs to the ABC transporter superfamily. Phosphate importer (TC 3.A.1.7) family. In terms of assembly, the complex is composed of two ATP-binding proteins (PstB), two transmembrane proteins (PstC and PstA) and a solute-binding protein (PstS).

It is found in the cell membrane. It carries out the reaction phosphate(out) + ATP + H2O = ADP + 2 phosphate(in) + H(+). In terms of biological role, part of the ABC transporter complex PstSACB involved in phosphate import. Responsible for energy coupling to the transport system. In Haloarcula marismortui (strain ATCC 43049 / DSM 3752 / JCM 8966 / VKM B-1809) (Halobacterium marismortui), this protein is Phosphate import ATP-binding protein PstB 2.